We begin with the raw amino-acid sequence, 252 residues long: MTNWKPLVSVITPSYNARDYIEDTVHSVLDQSHPHWEMIIVDDCSTDGTRDILQQYEKIDERIHVVYLEENSGAAVARNKALERAQGRYVAFLDSDDKWKKDKLEKQLEFMMERSCAFSFTGYSLMAQDGTPLDKFIHAPESLTYDDALKNTIIGCLTVMIDREQTGQIQMPNIRTRQDLATWLSLLKKGFTAYGMNECLAEYRLVNNSISSNKWKAAKKTWFVYREIERLHFMKATWCFVQYAKNAVKKRL.

Belongs to the glycosyltransferase 2 family.

It functions in the pathway cell wall biogenesis; teichuronic acid biosynthesis. In Bacillus subtilis (strain 168), this protein is Putative teichuronic acid biosynthesis glycosyltransferase TuaG (tuaG).